A 429-amino-acid polypeptide reads, in one-letter code: Serum response factor-binding protein 1 (429 aa).

Position 2 is an N-acetylalanine (Ala-2). 2 coiled-coil regions span residues 42–67 (KGTE…AMKE) and 108–146 (LLKK…NHSE). Disordered regions lie at residues 131 to 157 (AEVE…NGSN) and 176 to 429 (LAKK…TFDD). The segment covering 146-157 (ENTLYSNDNGSN) has biased composition (polar residues). Basic and acidic residues predominate over residues 183–195 (NSKEKIAKMEHGP). Residue Lys-190 forms a Glycyl lysine isopeptide (Lys-Gly) (interchain with G-Cter in SUMO2) linkage. Phosphoserine is present on residues Ser-203, Ser-205, Ser-264, Ser-279, and Ser-281. Positions 249-265 (GGEEFCEEEKEYFDDST) are enriched in acidic residues. Positions 296-341 (KESSCHSSVKEQKPLEKVFLKEDTGETHGDTRNDKIKPSTETRKLE) are enriched in basic and acidic residues. Residue Lys-316 forms a Glycyl lysine isopeptide (Lys-Gly) (interchain with G-Cter in SUMO2) linkage. 3 positions are modified to phosphoserine: Ser-349, Ser-351, and Ser-367. The segment covering 357–367 (NFKEQAPKTRS) has biased composition (basic and acidic residues). A compositionally biased stretch (polar residues) spans 373–383 (NEPQIKNQFNK).

As to quaternary structure, interacts with SRF. Forms complexes with SRF and SRF cofactors ARID2, MYOCD and NKX2-5. Interacts with the N-terminus of SLC2A4. In terms of tissue distribution, abundantly expressed in heart and skeletal muscle, and at much lower levels in brain and lung.

It localises to the cytoplasm. It is found in the perinuclear region. May be involved in regulating transcriptional activation of cardiac genes during the aging process. May play a role in biosynthesis and/or processing of SLC2A4 in adipose cells. This is Serum response factor-binding protein 1 from Homo sapiens (Human).